A 155-amino-acid chain; its full sequence is Cytochrome c-type biogenesis protein CcmE (155 aa).

The Cytoplasmic segment spans residues 1-7 (MTRKQKR). The helical; Signal-anchor for type II membrane protein transmembrane segment at 8–28 (LVVIAGGMSFILAAVLLVMFA) threads the bilayer. Over 29–155 (FSQSVAYFYM…GKGQEAKATP (127 aa)) the chain is Periplasmic. 2 residues coordinate heme: histidine 124 and tyrosine 128.

The protein belongs to the CcmE/CycJ family.

The protein localises to the cell inner membrane. Functionally, heme chaperone required for the biogenesis of c-type cytochromes. Transiently binds heme delivered by CcmC and transfers the heme to apo-cytochromes in a process facilitated by CcmF and CcmH. The polypeptide is Cytochrome c-type biogenesis protein CcmE (Rhizobium etli (strain ATCC 51251 / DSM 11541 / JCM 21823 / NBRC 15573 / CFN 42)).